A 941-amino-acid chain; its full sequence is MHKRNGPQAPPGRGAVTARQLGLLVDFSPDGLMIPEDGVNDEELEAEFLALVGGQPQALEKLKGKGPLPMEAIEKMARLCMRDLDEDEEGTDEDVEADEDLLAELNEVLGEERKAVEPAMPVVQPKPSSPNPGIEATLQERLILYQSAVESARQAGDSAKMRRYDRGLKTLENLLVSAKKGNTINEADIPPPVASGKGPAIGHSHTHTTSHLAPVSPPAPEPSVTLEAPSTTAQTSAKPQLSPDPCSPLARLQSLQHEYKVAALRAKHQDDTATAARYLRVSKSFDPVLEALSRGELVDLSRLPPPPDQLSPEPPLPAAQPVTPASTLTRPEVPQPPKNLLEALEQRMERYHVAAAQAKAKGDQRKARMHERIVKQYQDAIRAHKAGRAVDVAELPVPPGFPPIQGLESAEPSQQSLVGVLETAMKLANHEEGSDEEEEETPKKNTPAASTAQPKASPSRAPPSGPAPAGKAASKGTSTRAQQQLAFLEGRKKQLLQAALRAKQKNDVEGAKMHLRQAKGLEPMLEASRNGLPVDIAKVPPAPVNKDDFVLVQRPGPGMSQEAVRRYGELTKLLRQQHEMCLNHSTQFTHLGNIAETIKFEKLAEDCKRSMDTLKQAFARSLPTPAARFEQRTFSVIKIFPDLSNNDMLLFIVKGINLPTPPGLSPSDLDAFVRFDFPYPNVEEAQKDKTSVIKSTDSPEFKEQFKLCINRGHRGFRRAIQTKGIKFEVVHKGGLFKTDRVLGTAQLKLDTLETACEVHEILEVLDGRRPTGGRLEVMVRIREPLTAQQLETTTERWLVIDHIPAAVPTVTGPKAKVPLIPASSKEAGNRSSRPLHSLSVLAFDQERLERKILALRQARRPVPPEVAQQYQDVVQRSQWQRAQLEQGGAALRREYASHLERQLHFYTEAARRLGYDGSREAAKEALYRRNLVESELQRLRR.

Thr-91 carries the phosphothreonine modification. Disordered regions lie at residues 183-248 and 301-336; these read TINE…PCSP and SRLP…VPQP. Residues 228-239 show a composition bias toward polar residues; it reads APSTTAQTSAKP. Phosphoserine is present on Ser-247. The span at 303 to 318 shows a compositional bias: pro residues; the sequence is LPPPPDQLSPEPPLPA. The stretch at 338–384 forms a coiled coil; the sequence is KNLLEALEQRMERYHVAAAQAKAKGDQRKARMHERIVKQYQDAIRAH. Residues 428–482 form a disordered region; that stretch reads ANHEEGSDEEEEETPKKNTPAASTAQPKASPSRAPPSGPAPAGKAASKGTSTRAQ. The residue at position 434 (Ser-434) is a Phosphoserine. Low complexity predominate over residues 467-476; it reads APAGKAASKG. A coiled-coil region spans residues 475–508; the sequence is KGTSTRAQQQLAFLEGRKKQLLQAALRAKQKNDV. In terms of domain architecture, C2 spans 628 to 762; it reads RFEQRTFSVI…ETACEVHEIL (135 aa).

It belongs to the CC2D1 family. As to expression, strongly expressed in several brain areas including frontal cortex, cortex, mesencephalon, hippocampus, midbrain and hypothalamus. Also expressed in testis and at low levels in pituitary, liver and kidney. In brain the highest levels are detected in hippocampal pyramidal cells and raphe nuclei.

Its subcellular location is the cytoplasm. It is found in the nucleus. The protein resides in the cytoskeleton. The protein localises to the microtubule organizing center. It localises to the centrosome. In terms of biological role, transcription factor that binds specifically to the DRE (dual repressor element) and represses 5-HT1A gene transcription though this element. Mediates HDAC-independent repression of HTR1A promoter. CAMK2G inhibits CC2D1a-induced repression of the HTR1A. May play a role in the altered regulation of 5-HT1A receptors associated with anxiety and major depression. Performs essential function in controlling functional maturation of synapses. This Rattus norvegicus (Rat) protein is Coiled-coil and C2 domain-containing protein 1A (Cc2d1a).